Here is a 341-residue protein sequence, read N- to C-terminus: Glycerol-3-phosphate dehydrogenase [NAD(P)+] 1 (341 aa).

NADPH contacts are provided by S17, W18, R37, and K112. The sn-glycerol 3-phosphate site is built by K112 and G140. Position 144 (A144) interacts with NADPH. Sn-glycerol 3-phosphate contacts are provided by K195, D248, S258, R259, and N260. Residue K195 is the Proton acceptor of the active site. R259 contacts NADPH. Residues V283 and E285 each coordinate NADPH.

Belongs to the NAD-dependent glycerol-3-phosphate dehydrogenase family.

It is found in the cytoplasm. It carries out the reaction sn-glycerol 3-phosphate + NAD(+) = dihydroxyacetone phosphate + NADH + H(+). The catalysed reaction is sn-glycerol 3-phosphate + NADP(+) = dihydroxyacetone phosphate + NADPH + H(+). It participates in membrane lipid metabolism; glycerophospholipid metabolism. Its function is as follows. Catalyzes the reduction of the glycolytic intermediate dihydroxyacetone phosphate (DHAP) to sn-glycerol 3-phosphate (G3P), the key precursor for phospholipid synthesis. The polypeptide is Glycerol-3-phosphate dehydrogenase [NAD(P)+] 1 (Mycobacterium bovis (strain ATCC BAA-935 / AF2122/97)).